The chain runs to 431 residues: Protein PIN-LIKES 6 (431 aa).

The Lumenal segment spans residues Met1 to Lys29. The helical transmembrane segment at Ile30–Ser50 threads the bilayer. The Cytoplasmic portion of the chain corresponds to Lys51–Gly66. A helical transmembrane segment spans residues Leu67–Leu87. Topologically, residues Gln88–Trp93 are lumenal. The chain crosses the membrane as a helical span at residues Trp94–Val114. Topologically, residues Ala115–Thr128 are cytoplasmic. A helical membrane pass occupies residues Ile129–Cys149. Over Arg150–Tyr169 the chain is Lumenal. The chain crosses the membrane as a helical span at residues Ile170–Ala190. Residues Pro191–Gln268 are Cytoplasmic-facing. A helical membrane pass occupies residues Ile269–Thr289. Residues Lys290–Ser306 are Lumenal-facing. Residues Cys307–Ile327 form a helical membrane-spanning segment. The Cytoplasmic portion of the chain corresponds to Asn328–Thr340. Residues Ala341 to Val361 traverse the membrane as a helical segment. Residues Ala362–Arg376 are Lumenal-facing. The helical transmembrane segment at Phe377 to Leu397 threads the bilayer. Residues Arg398–Ala406 lie on the Cytoplasmic side of the membrane. The chain crosses the membrane as a helical span at residues Val407–Ile427. The Lumenal segment spans residues Asn428–Phe431.

This sequence belongs to the auxin efflux carrier (TC 2.A.69.2) family. As to expression, expressed in seedlings, rosette and cauline leaves, stems and flowers.

The protein localises to the endoplasmic reticulum membrane. Involved in cellular auxin homeostasis by regulating auxin metabolism. Regulates intracellular auxin accumulation at the endoplasmic reticulum and thus auxin availability for nuclear auxin signaling. This chain is Protein PIN-LIKES 6, found in Arabidopsis thaliana (Mouse-ear cress).